The following is a 48-amino-acid chain: Toxin CSTX-15 (48 aa).

Cystine bridges form between Cys3/Cys18, Cys10/Cys27, Cys17/Cys42, and Cys29/Cys40.

This sequence belongs to the neurotoxin 19 (CSTX) family. 12 subfamily. As to quaternary structure, heterodimer of A and B chains; disulfide-linked. Contains 4 disulfide bonds. In terms of tissue distribution, expressed by the venom gland.

The protein localises to the secreted. This Cupiennius salei (American wandering spider) protein is Toxin CSTX-15.